A 236-amino-acid polypeptide reads, in one-letter code: Eukaryotic translation initiation factor 3 subunit J (236 aa).

The segment at 1-65 is disordered; it reads MADDWESAAD…APAKPKPNKA (65 aa). The span at 28-46 shows a compositional bias: acidic residues; the sequence is GEDEDEDIKDSWEDEEEKK. The segment covering 47-58 has biased composition (basic and acidic residues); it reads DEEKPTKTEAPA.

This sequence belongs to the eIF-3 subunit J family. In terms of assembly, component of the eukaryotic translation initiation factor 3 (eIF-3) complex. The eIF-3 complex interacts with pix.

The protein resides in the cytoplasm. Functionally, component of the eukaryotic translation initiation factor 3 (eIF-3) complex, which is involved in protein synthesis of a specialized repertoire of mRNAs and, together with other initiation factors, stimulates binding of mRNA and methionyl-tRNAi to the 40S ribosome. The eIF-3 complex specifically targets and initiates translation of a subset of mRNAs involved in cell proliferation. This Drosophila melanogaster (Fruit fly) protein is Eukaryotic translation initiation factor 3 subunit J.